Consider the following 657-residue polypeptide: 1-deoxy-D-xylulose-5-phosphate synthase (657 aa).

Residue His-73 participates in thiamine diphosphate binding. Positions 91-110 are disordered; that stretch reads RQEGGMSGYPDRGESEHDIV. Basic and acidic residues predominate over residues 101–110; the sequence is DRGESEHDIV. Residue 113–115 coordinates thiamine diphosphate; the sequence is SHA. Mg(2+) is bound at residue Asp-145. Residues 146–147, Asn-175, Tyr-293, and Glu-375 each bind thiamine diphosphate; that span reads GA. Asn-175 is a Mg(2+) binding site.

This sequence belongs to the transketolase family. DXPS subfamily. In terms of assembly, homodimer. It depends on Mg(2+) as a cofactor. Thiamine diphosphate is required as a cofactor.

The catalysed reaction is D-glyceraldehyde 3-phosphate + pyruvate + H(+) = 1-deoxy-D-xylulose 5-phosphate + CO2. Its pathway is metabolic intermediate biosynthesis; 1-deoxy-D-xylulose 5-phosphate biosynthesis; 1-deoxy-D-xylulose 5-phosphate from D-glyceraldehyde 3-phosphate and pyruvate: step 1/1. In terms of biological role, catalyzes the acyloin condensation reaction between C atoms 2 and 3 of pyruvate and glyceraldehyde 3-phosphate to yield 1-deoxy-D-xylulose-5-phosphate (DXP). This is 1-deoxy-D-xylulose-5-phosphate synthase from Arthrobacter sp. (strain FB24).